The sequence spans 387 residues: ATP-dependent Clp protease proteolytic subunit-related protein 1, chloroplastic (387 aa).

The N-terminal 41 residues, 1–41 (MATALVSPLTSQLNHEAVCSKFVLPKSPFMSGSKLFSSNMP), are a transit peptide targeting the chloroplast. The segment covering 355 to 365 (QDSSFEKRDYD) has biased composition (basic and acidic residues). The tract at residues 355 to 387 (QDSSFEKRDYDGTLAQRAMRPGGGSPAAPAGLR) is disordered.

This sequence belongs to the peptidase S14 family. In terms of assembly, component of the chloroplastic Clp protease core complex which consist of at least 16 proteins: CLPP4 (3 copies), CLPP5 (3 copies), CLPR4 (2 copies), ClpP1 (1 copy), CLPP6 (1 copy), CLPR2 (1 copy), CLPT1 (1 copy), CLPT2 (1 copy) and 3 copies of CLPP3 and/or CLPR1 and/or CLPR3. The core complex is organized in two heptameric rings, one containing CLPP3,4,5,6 in a 1:2:3:1 ratio and the other CLPP1 and CLPR1,2,3,4 in a 3:1:1:1:1 ratio.

The protein localises to the plastid. It is found in the chloroplast stroma. Required for chloroplast development and differentiation. This chain is ATP-dependent Clp protease proteolytic subunit-related protein 1, chloroplastic, found in Arabidopsis thaliana (Mouse-ear cress).